We begin with the raw amino-acid sequence, 3068 residues long: Highly reducing polyketide synthase 17 (3068 aa).

Residues 100–526 (IEPIAIVGAS…GTNAHAIMER (427 aa)) enclose the Ketosynthase family 3 (KS3) domain. Active-site for beta-ketoacyl synthase activity residues include Cys274, His410, and His449. Residues 627–938 (YVFTGQGAQW…LAGPIRQCLA (312 aa)) form a malonyl-CoA:ACP transacylase (MAT) domain region. Ser721 serves as the catalytic For malonyltransferase activity. Positions 1027–1160 (HHLLGVRMTE…GVVEGVMTLD (134 aa)) are N-terminal hotdog fold. Residues 1027 to 1311 (HHLLGVRMTE…RASNIDMTIV (285 aa)) form a dehydratase (DH) domain region. The PKS/mFAS DH domain maps to 1027–1334 (HHLLGVRMTE…SRSLAAHVDG (308 aa)). His1059 serves as the catalytic Proton acceptor; for dehydratase activity. The tract at residues 1179 to 1334 (NRTMVIPEEL…SRSLAAHVDG (156 aa)) is C-terminal hotdog fold. Asp1247 serves as the catalytic Proton donor; for dehydratase activity. The enoylreductase (ER) domain stretch occupies residues 1735 to 2037 (LGPVQSSKGD…LVRQGGKVIL (303 aa)). The interval 2062–2240 (AAYVVAGGMG…FLSMNIGWIE (179 aa)) is catalytic ketoreductase (KR) domain. The Carrier domain maps to 2345–2423 (TIIDFISSAI…DLAEKVASRS (79 aa)). O-(pantetheine 4'-phosphoryl)serine is present on Ser2383. The tract at residues 2831–3062 (FDVASLGLRS…SCMITSLLED (232 aa)) is choline/carnitine acyltransferase (cAT) domain.

The protein operates within secondary metabolite biosynthesis. Functionally, highly reducing polyketide synthase; part of the gene cluster that mediates the biosynthesis of (2Z,4E,6E,10E)-9-hydroxydodeca-2,4,6,10-tetraenoic acid (BAA), (2E,4E,6E,10E)-9-hydroxydodeca-2,4,6,10-tetraenoic acid (BAB), and (2Z,4E,6E)-octa-2,4,6-trienedioic acid (PBA). The highly reducing polyketide synthase Ba17a is sufficent to produce PBA and BAA. The still to be characterized protein Ba17b leads to an increased production of BAA as well as to the production of the new compound BAB. BAA does not possess insecticidal activity against G.mellonella larvae, however, both BAA and BAB increase the growth of Candida albicans and BAA can mitigate the fungicidal effects of fluconazole over C.albicans, suggesting that generalist pathogens such as M.anisopliae, can potentially manipulate the yeast microbiota found in arthropods (and anywhere else) by the activity of compounds as BAA and BAB. This chain is Highly reducing polyketide synthase 17, found in Metarhizium anisopliae (Entomophthora anisopliae).